We begin with the raw amino-acid sequence, 247 residues long: MKNENLQQKNQTVSSPIVVALDYASQDAALSFVDRIDPQDCRLKVGKEMFTLFGPQFVQTLQQRGFDVFLDLKFHDIPNTVAHAVAAAADLGVWMVNVHASGGSRMMAAAKDALVPFGKDAPLLIAVTVLTSMDEEDLRGLGITVSPAEQAERLAVLTHNSGLDGVVCSAHEAQRLKQVCGQAFKLITPGIRPAGSDVGDQRRIMTPIQAQQAGVDYMVIGRPITQSSDPAQTLCDIRASLLNGIAS.

Residues aspartate 22, lysine 44, 71–80 (DLKFHDIPNT), threonine 131, arginine 192, glutamine 201, glycine 221, and arginine 222 each bind substrate. The Proton donor role is filled by lysine 73.

This sequence belongs to the OMP decarboxylase family. Type 1 subfamily. Homodimer.

The enzyme catalyses orotidine 5'-phosphate + H(+) = UMP + CO2. Its pathway is pyrimidine metabolism; UMP biosynthesis via de novo pathway; UMP from orotate: step 2/2. In terms of biological role, catalyzes the decarboxylation of orotidine 5'-monophosphate (OMP) to uridine 5'-monophosphate (UMP). The chain is Orotidine 5'-phosphate decarboxylase from Pectobacterium atrosepticum (strain SCRI 1043 / ATCC BAA-672) (Erwinia carotovora subsp. atroseptica).